The primary structure comprises 425 residues: MLDLKFIRDNLDLVKRSIKARGLVLDIDKLIYLDDKRKKLITKIGELNAKRNENSSKMQENLDKVLKISLIETGKILKKQLIDLEEELERVSVDFDLENKKVPNILSPDVPIGSSEEDNFEIKRVGVVPQFDFKPKDHLELGRDLDLLDFDRAREISGSKFYYLKNEAVFLEIALINFSLNKLRDKGFDVFITPDVAREFIVDGIGFNPRGNESNIYKIEDTDKYLVGTSEITLGGYYYNKIIDLTLPIRMAGFSHCFRKEAGAYGQLSKGLYRVHQFSKVEMFCFCKAEESGVIHDEFLSIQEQIFTELEIPYRVLNICSFDLGSPAYKKYDIEAWMPGRDGKGGYGEVTSTSNCTDYQSRRLKIRYKDQDGQNKFAHMVNGTAIATTRVIISILENFQDQKGGVRIPKSLVKYTGFDYIPFKN.

229–231 contacts L-serine; it reads TSE. Residues 259-261 and Val-275 each bind ATP; that span reads RKE. Glu-282 contributes to the L-serine binding site. An ATP-binding site is contributed by 349 to 352; sequence EVTS. L-serine is bound at residue Thr-384.

It belongs to the class-II aminoacyl-tRNA synthetase family. Type-1 seryl-tRNA synthetase subfamily. As to quaternary structure, homodimer. The tRNA molecule binds across the dimer.

The protein resides in the cytoplasm. The enzyme catalyses tRNA(Ser) + L-serine + ATP = L-seryl-tRNA(Ser) + AMP + diphosphate + H(+). It carries out the reaction tRNA(Sec) + L-serine + ATP = L-seryl-tRNA(Sec) + AMP + diphosphate + H(+). Its pathway is aminoacyl-tRNA biosynthesis; selenocysteinyl-tRNA(Sec) biosynthesis; L-seryl-tRNA(Sec) from L-serine and tRNA(Sec): step 1/1. In terms of biological role, catalyzes the attachment of serine to tRNA(Ser). Is also able to aminoacylate tRNA(Sec) with serine, to form the misacylated tRNA L-seryl-tRNA(Sec), which will be further converted into selenocysteinyl-tRNA(Sec). This is Serine--tRNA ligase from Borreliella burgdorferi (strain ATCC 35210 / DSM 4680 / CIP 102532 / B31) (Borrelia burgdorferi).